A 547-amino-acid chain; its full sequence is Methionine--tRNA ligase (547 aa).

Residues 15 to 25 (PYANGSLHLGH) carry the 'HIGH' region motif. The Zn(2+) site is built by cysteine 146, cysteine 149, cysteine 159, and cysteine 162. The short motif at 332–336 (KMSKS) is the 'KMSKS' region element. Residue lysine 335 coordinates ATP.

The protein belongs to the class-I aminoacyl-tRNA synthetase family. MetG type 1 subfamily. As to quaternary structure, monomer. Requires Zn(2+) as cofactor.

It localises to the cytoplasm. It carries out the reaction tRNA(Met) + L-methionine + ATP = L-methionyl-tRNA(Met) + AMP + diphosphate. Functionally, is required not only for elongation of protein synthesis but also for the initiation of all mRNA translation through initiator tRNA(fMet) aminoacylation. This Baumannia cicadellinicola subsp. Homalodisca coagulata protein is Methionine--tRNA ligase.